A 270-amino-acid chain; its full sequence is uncharacterized protein (270 aa).

Helical transmembrane passes span 12 to 32 (AAIV…RNVG), 35 to 55 (TLSV…PFCL), 64 to 84 (TLLG…AAIQ), 88 to 108 (VAMA…LSVL), 117 to 137 (TLLA…PYAE), 138 to 158 (LTFG…VFVL), 171 to 191 (ITFY…LMFG), 194 to 214 (GSWL…FVLF), 226 to 246 (APIL…FYFG), and 248 to 268 (TLTL…LIAW). EamA domains lie at 19–133 (VLMG…LMLT) and 150–269 (LSYA…IAWR).

The protein belongs to the EamA transporter family.

Its subcellular location is the cell membrane. This is an uncharacterized protein from Archaeoglobus fulgidus (strain ATCC 49558 / DSM 4304 / JCM 9628 / NBRC 100126 / VC-16).